Consider the following 697-residue polypeptide: Phosphate acetyltransferase (697 aa).

Residues 374 to 697 (LFLYNLVQAA…TVVITALQVK (324 aa)) form a phosphate acetyltransferase region.

The protein in the N-terminal section; belongs to the CobB/CobQ family. It in the C-terminal section; belongs to the phosphate acetyltransferase and butyryltransferase family.

It is found in the cytoplasm. The enzyme catalyses acetyl-CoA + phosphate = acetyl phosphate + CoA. It functions in the pathway metabolic intermediate biosynthesis; acetyl-CoA biosynthesis; acetyl-CoA from acetate: step 2/2. In terms of biological role, involved in acetate metabolism. This chain is Phosphate acetyltransferase (pta), found in Synechocystis sp. (strain ATCC 27184 / PCC 6803 / Kazusa).